A 187-amino-acid chain; its full sequence is Ras-like protein rasD (187 aa).

10–17 (GGGGVGKS) is a GTP binding site. The Effector region signature appears at 32–40 (YDPTIEDSY). GTP is bound by residues 57–61 (DTAGQ) and 116–119 (NKAD). A Cysteine methyl ester modification is found at Cys-184. A lipid anchor (S-geranylgeranyl cysteine) is attached at Cys-184. Residues 185-187 (LIL) constitute a propeptide, removed in mature form.

The protein belongs to the small GTPase superfamily. Ras family.

Its subcellular location is the cell membrane. The enzyme catalyses GTP + H2O = GDP + phosphate + H(+). Its activity is regulated as follows. Alternates between an inactive form bound to GDP and an active form bound to GTP. Activated by a guanine nucleotide-exchange factor (GEF) and inactivated by a GTPase-activating protein (GAP). In terms of biological role, ras proteins bind GDP/GTP and possess intrinsic GTPase activity. This chain is Ras-like protein rasD (rasD), found in Dictyostelium discoideum (Social amoeba).